The sequence spans 224 residues: N-terminal Xaa-Pro-Lys N-methyltransferase 1-A (224 aa).

S-adenosyl-L-methionine is bound by residues Gly-70, Arg-75, 92-94 (DVT), 120-121 (LQ), and Gln-136.

It belongs to the methyltransferase superfamily. NTM1 family.

It localises to the nucleus. The enzyme catalyses N-terminal L-alanyl-L-prolyl-L-lysyl-[protein] + 3 S-adenosyl-L-methionine = N-terminal N,N,N-trimethyl-L-alanyl-L-prolyl-L-lysyl-[protein] + 3 S-adenosyl-L-homocysteine + 3 H(+). The catalysed reaction is N-terminal L-seryl-L-prolyl-L-lysyl-[protein] + 3 S-adenosyl-L-methionine = N-terminal N,N,N-trimethyl-L-seryl-L-prolyl-L-lysyl-[protein] + 3 S-adenosyl-L-homocysteine + 3 H(+). It carries out the reaction N-terminal L-prolyl-L-prolyl-L-lysyl-[protein] + 2 S-adenosyl-L-methionine = N-terminal N,N-dimethyl-L-prolyl-L-prolyl-L-lysyl-[protein] + 2 S-adenosyl-L-homocysteine + 2 H(+). Functionally, distributive alpha-N-methyltransferase that methylates the N-terminus of target proteins containing the N-terminal motif [Ala/Gly/Pro/Ser]-Pro-Lys when the initiator Met is cleaved. Specifically catalyzes mono-, di- or tri-methylation of the exposed alpha-amino group of the Ala, Gly or Ser residue in the [Ala/Gly/Ser]-Pro-Lys motif and mono- or di-methylation of Pro in the Pro-Pro-Lys motif. Required during mitosis for normal bipolar spindle formation and chromosome segregation via its action on target proteins. The sequence is that of N-terminal Xaa-Pro-Lys N-methyltransferase 1-A (ntmt1-a) from Xenopus laevis (African clawed frog).